Reading from the N-terminus, the 935-residue chain is Phosphoenolpyruvate carboxylase (935 aa).

Residues histidine 161 and lysine 593 contribute to the active site.

Belongs to the PEPCase type 1 family. Mg(2+) serves as cofactor.

It carries out the reaction oxaloacetate + phosphate = phosphoenolpyruvate + hydrogencarbonate. Its function is as follows. Forms oxaloacetate, a four-carbon dicarboxylic acid source for the tricarboxylic acid cycle. The sequence is that of Phosphoenolpyruvate carboxylase from Mycobacterium avium (strain 104).